A 382-amino-acid polypeptide reads, in one-letter code: MAQQETAGGVLLIAASILALIFANSYLSGFYNGVLNLPLVVAIGAFEISKPLLLWVNDGLMALFFLMVGLEVKREVLEGHLSQPSQVVLPGLAALAGVAFPAIIYASFNWQDPTALRGWAIPSATDIAFALGVFSLFGRHLPVSLKLFLLSVAIFDDIAAIVIIALFYSHELSTLSLLVAGIGIVMLFVLNRLKIRHVSPFMFVGLVVWAAVLKSGVHATLAGFVIAWFIPLKHKNIHDEPMLLSLEHALQPWVAYFILPFFAFVNAGVHLGGIGLDTLTAPVTLGIIVGLFVGKQLGIFSVCWLSIKLRIAKLPEGATWRELYGVCLLAGIGFTMSLFIGSLAFEGANSEMVASVKLGVLFGSLLSAICGALILTNSRKIK.

Transmembrane regions (helical) follow at residues 7-27 (AGGV…NSYL), 28-48 (SGFY…AFEI), 52-72 (LLLW…GLEV), 88-108 (VLPG…YASF), 118-138 (GWAI…SLFG), 147-167 (LFLL…IALF), 170-190 (HELS…LFVL), 206-226 (LVVW…GFVI), 254-274 (VAYF…LGGI), 285-305 (LGII…VCWL), 325-345 (GVCL…SLAF), and 356-376 (VKLG…LILT).

The protein belongs to the NhaA Na(+)/H(+) (TC 2.A.33) antiporter family.

It is found in the cell inner membrane. It catalyses the reaction Na(+)(in) + 2 H(+)(out) = Na(+)(out) + 2 H(+)(in). Its function is as follows. Na(+)/H(+) antiporter that extrudes sodium in exchange for external protons. The protein is Na(+)/H(+) antiporter NhaA 2 of Saccharophagus degradans (strain 2-40 / ATCC 43961 / DSM 17024).